The following is a 193-amino-acid chain: Non-specific lipid transfer protein GPI-anchored 10 (193 aa).

The first 24 residues, 1–24 (MASSTLLITLLISLSAFFLRMVLA), serve as a signal peptide directing secretion. Intrachain disulfides connect C30-C71, C40-C55, C56-C98, and C69-C107. N76, N87, and N103 each carry an N-linked (GlcNAc...) asparagine glycan. Residues 109–140 (SSFPGEAPSDSSSVAPPPSSSTGSQISQGAKN) form a disordered region. The segment covering 116-132 (PSDSSSVAPPPSSSTGS) has biased composition (low complexity). N140 is a glycosylation site (N-linked (GlcNAc...) asparagine). S168 carries the GPI-anchor amidated serine lipid modification. A propeptide spans 169–193 (SGSKSEIQLTIFALAAILPAALLLI) (removed in mature form).

This sequence belongs to the plant LTP family.

The protein resides in the cell membrane. Functionally, probable lipid transfer protein. In Arabidopsis thaliana (Mouse-ear cress), this protein is Non-specific lipid transfer protein GPI-anchored 10.